We begin with the raw amino-acid sequence, 538 residues long: Methionine--tRNA ligase (538 aa).

Positions 21 to 31 (YYVNDAPHLGH) match the 'HIGH' region motif. Zn(2+) is bound by residues C137, C140, C162, and H165. A 'KMSKS' region motif is present at residues 313–317 (KMSKS). Residue K316 coordinates ATP.

The protein belongs to the class-I aminoacyl-tRNA synthetase family. MetG type 2A subfamily. Monomer. It depends on Zn(2+) as a cofactor.

Its subcellular location is the cytoplasm. The catalysed reaction is tRNA(Met) + L-methionine + ATP = L-methionyl-tRNA(Met) + AMP + diphosphate. Functionally, is required not only for elongation of protein synthesis but also for the initiation of all mRNA translation through initiator tRNA(fMet) aminoacylation. The chain is Methionine--tRNA ligase from Streptomyces coelicolor (strain ATCC BAA-471 / A3(2) / M145).